Reading from the N-terminus, the 302-residue chain is N-acetylaspartate synthetase (302 aa).

Over residues 46-60 the composition is skewed to pro residues; sequence PGPAAAPPAPPPAPV. The tract at residues 46-72 is disordered; it reads PGPAAAPPAPPPAPVAQPHGGAGGAGP. Residues 121 to 141 form a helical membrane-spanning segment; sequence YALLAALCFAVSRSLLLTCLV. An N-acetyltransferase domain is found at 143 to 283; the sequence is AALLGLRYYY…VLPGMTLSLA (141 aa).

It belongs to the NAT8 family. In terms of tissue distribution, expressed in brain.

It is found in the cytoplasm. Its subcellular location is the microsome membrane. It localises to the mitochondrion membrane. The protein localises to the endoplasmic reticulum membrane. The catalysed reaction is L-aspartate + acetyl-CoA = N-acetyl-L-aspartate + CoA + H(+). Aminooxyacetic acid (AOAA) blocks its activity in both cytoplasm and mitochondria. Catalyzes the synthesis of N-acetylaspartate acid (NAA) from L-aspartate and acetyl-CoA. Promotes dopamine uptake by regulating TNF-alpha expression. Attenuates methamphetamine-induced inhibition of dopamine uptake. The chain is N-acetylaspartate synthetase from Homo sapiens (Human).